The chain runs to 530 residues: MELTLWTYEGPPHVGAMRIAASMHGVHYVLHAPQGDTYADLLFTMIERRGQRPPVTYTTFQARDLGGDTAELVKRHVQEAADRFQPDALLVGESCTAELIQDQPGALAQGMGLPMPVVTLELPAYSKKENWGASETFYQLMRGLLKQSVPPQPSHDVQAWKHEGRRPRVNLLGPSLLGFRCRDDVLEVQRLLSLHGIDVGVVAPLGAGVEDILRLPQADLNVCLYPEVAESSCSWLERNFGIPFSKTVPIGMGATHDFLVEVHALLGMTPPEAAEGYQRSRMPWYSESVDSTYLTGKRVFIFGDGTHAIAAARICSEELGFTVVGLGSYSREMARPVRAAAKKLGLEALICDDYLAVEAAMAEAAPELVLGTQMERHSAKRLGIPCAVISTPMHVQDVPARLSPQMGWEGANVIFDAWVHPLMMGLEEHLIGMFRHDFEFVDGHQSHLGHAGGAGAGNNHGTESVRASGCQDEAPSGQLIWTADGEAELKKIPFFVRGKVRRNAESYARTVGCKEISSETLYDAKAHYKA.

D36 provides a ligand contact to [4Fe-4S] cluster. The active-site Proton donor is the D290. A substrate-binding site is contributed by 425-426 (GL).

Belongs to the ChlB/BchB/BchZ family. As to quaternary structure, protochlorophyllide reductase is composed of three subunits; ChlL, ChlN and ChlB. Forms a heterotetramer of two ChlB and two ChlN subunits. The cofactor is [4Fe-4S] cluster.

It carries out the reaction chlorophyllide a + oxidized 2[4Fe-4S]-[ferredoxin] + 2 ADP + 2 phosphate = protochlorophyllide a + reduced 2[4Fe-4S]-[ferredoxin] + 2 ATP + 2 H2O. It participates in porphyrin-containing compound metabolism; chlorophyll biosynthesis (light-independent). Its function is as follows. Component of the dark-operative protochlorophyllide reductase (DPOR) that uses Mg-ATP and reduced ferredoxin to reduce ring D of protochlorophyllide (Pchlide) to form chlorophyllide a (Chlide). This reaction is light-independent. The NB-protein (ChlN-ChlB) is the catalytic component of the complex. The chain is Light-independent protochlorophyllide reductase subunit B from Synechococcus sp. (strain WH7803).